The chain runs to 254 residues: Short-chain dehydrogenase/reductase SDRA (254 aa).

Isoleucine 15–valine 39 is a binding site for NADP(+). Serine 146 contributes to the substrate binding site. Residue tyrosine 159 is the Proton acceptor of the active site. The Microbody targeting signal signature appears at serine 252 to leucine 254.

The protein belongs to the short-chain dehydrogenases/reductases (SDR) family.

The protein resides in the peroxisome. Involved with IBR3 and IBR10 in the peroxisomal beta-oxidation of indole-3-butyric acid (IBA) to form indole-3-acetic acid (IAA), a biologically active auxin. May be responsible for catalyzing the dehydrogenation step in the conversion of IBA. May be involved in the peroxisomal activation of 2,4-dichlorophenoxybutyric acid (2,4-DB), a precursor of active auxins that inhibit root growth. The polypeptide is Short-chain dehydrogenase/reductase SDRA (Arabidopsis thaliana (Mouse-ear cress)).